The primary structure comprises 527 residues: RUS family member 1 (527 aa).

Asn21 is a glycosylation site (N-linked (GlcNAc...) asparagine). The chain crosses the membrane as a helical span at residues 220-240 (SQETAVNLVGMLLSVIVSSFI). An N-linked (GlcNAc...) asparagine glycan is attached at Asn243. The helical transmembrane segment at 245 to 265 (SLIVTWLVFLFFTSLHLFCNY) threads the bilayer. N-linked (GlcNAc...) asparagine glycosylation is present at Asn346. Positions 350 to 426 (TKNVNNNNNN…NNNNNNNNNK (77 aa)) are disordered. N-linked (GlcNAc...) asparagine glycosylation is found at Asn467 and Asn497.

It belongs to the RUS1 family.

Its subcellular location is the membrane. The chain is RUS family member 1 (rusf1) from Dictyostelium discoideum (Social amoeba).